A 257-amino-acid chain; its full sequence is Ribonuclease HII (257 aa).

Residues 72 to 257 (TYIAGIDEVG…FAPIKDMIQK (186 aa)) form the RNase H type-2 domain. The a divalent metal cation site is built by Asp78, Glu79, and Asp170.

It belongs to the RNase HII family. Requires Mn(2+) as cofactor. Mg(2+) serves as cofactor.

The protein localises to the cytoplasm. It carries out the reaction Endonucleolytic cleavage to 5'-phosphomonoester.. Functionally, endonuclease that specifically degrades the RNA of RNA-DNA hybrids. This Bacillus cereus (strain ATCC 10987 / NRS 248) protein is Ribonuclease HII.